Here is a 132-residue protein sequence, read N- to C-terminus: uncharacterized protein (132 aa).

The interval 113-132 is disordered; it reads LDPQSPLHSPPLSTSPDSRR.

This is an uncharacterized protein from Saccharomyces cerevisiae (strain ATCC 204508 / S288c) (Baker's yeast).